The following is a 138-amino-acid chain: Calmodulin-beta (138 aa).

EF-hand domains are found at residues 1–32, 33–68, 70–105, and 106–138; these read EFKEAFSLFDKDGDGTITTKELGTVMRSLGQN, PTEAELQDMINEVDADGNGTIDFPEFLTMMARKMKE, DSEEEIREAFRVFDKDGNGFISAAELRHVMTNLGEK, and LTDEEVDEMIREADIDGDGQVNYEEFVAMMTSK. 19 residues coordinate Ca(2+): D10, D12, D14, T16, E21, D46, D48, N50, T52, E57, D83, D85, N87, E94, D119, D121, D123, Q125, and E130.

The protein belongs to the calmodulin family.

Calmodulin mediates the control of a large number of enzymes, ion channels and other proteins by Ca(2+). Among the enzymes to be stimulated by the calmodulin-Ca(2+) complex are a number of protein kinases and phosphatases. This Arbacia punctulata (Punctuate sea urchin) protein is Calmodulin-beta.